Reading from the N-terminus, the 192-residue chain is GTP cyclohydrolase-2 (192 aa).

50 to 54 (RLHSE) is a GTP binding site. 3 residues coordinate Zn(2+): cysteine 55, cysteine 66, and cysteine 68. GTP-binding positions include 92–94 (EGR) and threonine 114. The Proton acceptor role is filled by aspartate 126. Arginine 128 acts as the Nucleophile in catalysis. GTP-binding residues include threonine 149 and lysine 154.

Belongs to the GTP cyclohydrolase II family. Requires Zn(2+) as cofactor.

The catalysed reaction is GTP + 4 H2O = 2,5-diamino-6-hydroxy-4-(5-phosphoribosylamino)-pyrimidine + formate + 2 phosphate + 3 H(+). Its pathway is cofactor biosynthesis; riboflavin biosynthesis; 5-amino-6-(D-ribitylamino)uracil from GTP: step 1/4. Catalyzes the conversion of GTP to 2,5-diamino-6-ribosylamino-4(3H)-pyrimidinone 5'-phosphate (DARP), formate and pyrophosphate. The protein is GTP cyclohydrolase-2 of Helicobacter pylori (strain P12).